A 174-amino-acid polypeptide reads, in one-letter code: MTSFQPQSSYSRDDLIECGKGNLFGPGNAQLPLPNMLMLDRITHISHTGGEFGKGEIIAELDISPDLWFFECHFPGDPVMPGCLGLDAMWQLVGFFLGWKGNLGRGRALGCGELKFTGQILPTAKKITYHIHLKRVIERKLIMGIADGRVSCDGKDIYFAHDLRVGLFQNTDSF.

Residue H73 is part of the active site.

It belongs to the thioester dehydratase family. FabA subfamily. In terms of assembly, homodimer.

Its subcellular location is the cytoplasm. It carries out the reaction a (3R)-hydroxyacyl-[ACP] = a (2E)-enoyl-[ACP] + H2O. The catalysed reaction is (3R)-hydroxydecanoyl-[ACP] = (2E)-decenoyl-[ACP] + H2O. It catalyses the reaction (2E)-decenoyl-[ACP] = (3Z)-decenoyl-[ACP]. It participates in lipid metabolism; fatty acid biosynthesis. In terms of biological role, necessary for the introduction of cis unsaturation into fatty acids. Catalyzes the dehydration of (3R)-3-hydroxydecanoyl-ACP to E-(2)-decenoyl-ACP and then its isomerization to Z-(3)-decenoyl-ACP. Can catalyze the dehydratase reaction for beta-hydroxyacyl-ACPs with saturated chain lengths up to 16:0, being most active on intermediate chain length. This is 3-hydroxydecanoyl-[acyl-carrier-protein] dehydratase from Cellvibrio japonicus (strain Ueda107) (Pseudomonas fluorescens subsp. cellulosa).